Reading from the N-terminus, the 450-residue chain is Tubulin alpha chain (450 aa).

Glutamine 11 contacts GTP. Position 40 is an N6-acetyllysine (lysine 40). GTP-binding residues include glutamate 71, serine 140, glycine 144, threonine 145, threonine 179, asparagine 206, and asparagine 228. Glutamate 71 lines the Mg(2+) pocket. Glutamate 254 is a catalytic residue. Residues 431 to 450 form a disordered region; it reads DYEEVGTDSVGEEDEEGEEY.

It belongs to the tubulin family. In terms of assembly, dimer of alpha and beta chains. A typical microtubule is a hollow water-filled tube with an outer diameter of 25 nm and an inner diameter of 15 nM. Alpha-beta heterodimers associate head-to-tail to form protofilaments running lengthwise along the microtubule wall with the beta-tubulin subunit facing the microtubule plus end conferring a structural polarity. Microtubules usually have 13 protofilaments but different protofilament numbers can be found in some organisms and specialized cells. It depends on Mg(2+) as a cofactor. Some glutamate residues at the C-terminus are polyglycylated, resulting in polyglycine chains on the gamma-carboxyl group. Glycylation is mainly limited to tubulin incorporated into axonemes (cilia and flagella) whereas glutamylation is prevalent in neuronal cells, centrioles, axonemes, and the mitotic spindle. Both modifications can coexist on the same protein on adjacent residues, and lowering polyglycylation levels increases polyglutamylation, and reciprocally. The precise function of polyglycylation is still unclear. In terms of processing, some glutamate residues at the C-terminus are polyglutamylated, resulting in polyglutamate chains on the gamma-carboxyl group. Polyglutamylation plays a key role in microtubule severing by spastin (SPAST). SPAST preferentially recognizes and acts on microtubules decorated with short polyglutamate tails: severing activity by SPAST increases as the number of glutamates per tubulin rises from one to eight, but decreases beyond this glutamylation threshold. Post-translationally, acetylation of alpha chains at Lys-40 is located inside the microtubule lumen. This modification has been correlated with increased microtubule stability, intracellular transport and ciliary assembly. Undergoes a tyrosination/detyrosination cycle, the cyclic removal and re-addition of a C-terminal tyrosine residue by the enzymes tubulin tyrosine carboxypeptidase (MATCAP, VASH1 or VASH2) and tubulin tyrosine ligase (TTL), respectively. In terms of processing, tyrosination promotes microtubule interaction with CAP-Gly microtubule plus-end tracking proteins. Tyrosinated tubulins regulate the initiation of dynein-driven motility. Post-translationally, detyrosination is involved in metaphase plate congression by guiding chromosomes during mitosis. Detyrosination increases microtubules-dependent mechanotransduction in dystrophic cardiac and skeletal muscle. In cardiomyocytes, detyrosinated microtubules are required to resist to contractile compression during contraction.

The protein localises to the cytoplasm. It is found in the cytoskeleton. It carries out the reaction GTP + H2O = GDP + phosphate + H(+). Tubulin is the major constituent of microtubules, a cylinder consisting of laterally associated linear protofilaments composed of alpha- and beta-tubulin heterodimers. Microtubules grow by the addition of GTP-tubulin dimers to the microtubule end, where a stabilizing cap forms. Below the cap, tubulin dimers are in GDP-bound state, owing to GTPase activity of alpha-tubulin. This is Tubulin alpha chain from Oncorhynchus keta (Chum salmon).